A 545-amino-acid chain; its full sequence is MDSQRNLLLIALLFVSFMIWQAWQTDNAPQPVAQTTQQTSNPATGDAASSAVPASGQGKLITVNTDVLSLTINTRGGDIEQAKLLAYPDTLGSSTPFQLLETTPAFVYQAQSGLTGRNGPDNPANGERPLFQAAQDSYTLPEGQEELRIPLTFTGKDGAIYTKTFVLKRNHYAVAVDYNVDNKSTTPLELTLFGQLKQTTELPKHRDTGSNNFALHTFRGAAYSSSDDKYQKYAFDKDENLSVTTQGGWVAMLQQYFATAWVPATQGSNTFYTAKPGDNLSTIGFKSTPVVVQPGAQQQLNATLWVGPELQDQMAQLAPHLDLTVDYGWLWFISQPLFKLLKFIHGFIGNWGFSIIIITFIVRGIMYPLTKAQYTSMAKMRMLQPKLQAMRERIGDDKQRMSQEMMALYKSEKVNPLGGCLPLVIQMPIFLALYYMLMGSVELRHAPFALWIHDLSAQDPYYILPILMGVTMFFIQKMSPTTVTDPMQQKIMTFMPVIFTVFFLWFPSGLVLYYIVSNLVTILQQQLIYRGLEKRGLHSRDKKKT.

A helical membrane pass occupies residues 6-26; the sequence is NLLLIALLFVSFMIWQAWQTD. The tract at residues 31–54 is disordered; the sequence is PVAQTTQQTSNPATGDAASSAVPA. The next 4 helical transmembrane spans lie at 342-362, 417-437, 455-475, and 496-516; these read KFIHGFIGNWGFSIIIITFIV, LGGCLPLVIQMPIFLALYYML, LSAQDPYYILPILMGVTMFFI, and PVIFTVFFLWFPSGLVLYYIV.

Belongs to the OXA1/ALB3/YidC family. Type 1 subfamily. In terms of assembly, interacts with the Sec translocase complex via SecD. Specifically interacts with transmembrane segments of nascent integral membrane proteins during membrane integration.

Its subcellular location is the cell inner membrane. Its function is as follows. Required for the insertion and/or proper folding and/or complex formation of integral membrane proteins into the membrane. Involved in integration of membrane proteins that insert both dependently and independently of the Sec translocase complex, as well as at least some lipoproteins. Aids folding of multispanning membrane proteins. The protein is Membrane protein insertase YidC of Serratia proteamaculans (strain 568).